A 142-amino-acid chain; its full sequence is Large ribosomal subunit protein uL13 (142 aa).

It belongs to the universal ribosomal protein uL13 family. As to quaternary structure, part of the 50S ribosomal subunit.

In terms of biological role, this protein is one of the early assembly proteins of the 50S ribosomal subunit, although it is not seen to bind rRNA by itself. It is important during the early stages of 50S assembly. The polypeptide is Large ribosomal subunit protein uL13 (Shewanella amazonensis (strain ATCC BAA-1098 / SB2B)).